Here is a 90-residue protein sequence, read N- to C-terminus: Small ribosomal subunit protein bS16 (90 aa).

This sequence belongs to the bacterial ribosomal protein bS16 family.

This is Small ribosomal subunit protein bS16 from Streptococcus pyogenes serotype M4 (strain MGAS10750).